The primary structure comprises 485 residues: Glutamyl-tRNA(Gln) amidotransferase subunit A (485 aa).

Active-site charge relay system residues include Lys79 and Ser154. Ser178 (acyl-ester intermediate) is an active-site residue.

The protein belongs to the amidase family. GatA subfamily. In terms of assembly, heterotrimer of A, B and C subunits.

It catalyses the reaction L-glutamyl-tRNA(Gln) + L-glutamine + ATP + H2O = L-glutaminyl-tRNA(Gln) + L-glutamate + ADP + phosphate + H(+). Allows the formation of correctly charged Gln-tRNA(Gln) through the transamidation of misacylated Glu-tRNA(Gln) in organisms which lack glutaminyl-tRNA synthetase. The reaction takes place in the presence of glutamine and ATP through an activated gamma-phospho-Glu-tRNA(Gln). The sequence is that of Glutamyl-tRNA(Gln) amidotransferase subunit A from Persephonella marina (strain DSM 14350 / EX-H1).